A 162-amino-acid chain; its full sequence is uncharacterized protein (162 aa).

An N-terminal signal peptide occupies residues 1–23 (MLSLKSPAVLLSMVILVPLFALA).

This is an uncharacterized protein from Mycosarcoma maydis (Corn smut fungus).